Here is a 1587-residue protein sequence, read N- to C-terminus: NHS-like protein 1 (1587 aa).

A Phosphoserine modification is found at Ser-24. Disordered regions lie at residues 140 to 163 (FAAG…KCSL) and 176 to 202 (RPKT…PLPT). A compositionally biased stretch (polar residues) spans 179–196 (TPTSGDFSDLHTQTNWTK). Phosphoserine is present on residues Ser-197 and Ser-328. The span at 431–446 (SAGQLDSRTPGSSSYS) shows a compositional bias: polar residues. Disordered stretches follow at residues 431-470 (SAGQ…PRHH) and 549-584 (SEPW…VSSC). Over residues 449 to 470 (KPRDRPTPRCSVKDDHQSPRHH) the composition is skewed to basic and acidic residues. A Phosphoserine modification is found at Ser-563. Positions 573–584 (GCSTPTSNVSSC) are enriched in polar residues. Phosphoserine is present on Ser-629. Disordered regions lie at residues 661-687 (KAKK…QTNG), 705-767 (SLPG…SSVK), and 789-1059 (NPTG…RPPM). Low complexity predominate over residues 705–720 (SLPGKGGSSPSQSPCS). Polar residues-rich tracts occupy residues 730 to 750 (SRSQ…TPNV), 757 to 767 (TPSQSDTSSVK), 792 to 801 (GGCSANTEAA), and 838 to 855 (RVTS…TPTA). Residues 885 to 911 (SLISSMSISSSSTSLSSNTSTEGSGTM) are compositionally biased toward low complexity. 3 stretches are compositionally biased toward pro residues: residues 923 to 934 (APPPPPLPPLPS), 958 to 972 (PLPP…PPEA), and 998 to 1021 (SLPP…PPLD). Over residues 1040 to 1055 (SSREALRRPANKEEGC) the composition is skewed to basic and acidic residues. At Ser-1079 the chain carries Phosphoserine. 2 disordered regions span residues 1083 to 1534 (AVLF…ARRA) and 1565 to 1587 (VDGI…EQKS). Polar residues-rich tracts occupy residues 1089 to 1099 (PSAQEQRTPTA) and 1112 to 1141 (SRNS…SQSQ). Ser-1157 and Ser-1218 each carry phosphoserine. Over residues 1222 to 1234 (AEGEAVRSQEEKS) the composition is skewed to basic and acidic residues. Polar residues predominate over residues 1275 to 1285 (QPNTSPGPTQE). Basic and acidic residues predominate over residues 1360-1370 (GRKDSEDDHTR). Ser-1373 and Ser-1375 each carry phosphoserine. The residue at position 1379 (Thr-1379) is a Phosphothreonine. Residues 1392–1409 (QVGSIQRSIKKSTTSSDN) show a composition bias toward polar residues. Residues 1434 to 1447 (KSTDPRFQRSRSEP) show a composition bias toward basic and acidic residues. 2 stretches are compositionally biased toward low complexity: residues 1448-1460 (SADS…SCSP) and 1484-1503 (SGPR…SRYS). Residues 1576-1587 (PSEQCGGTEQKS) are compositionally biased toward polar residues.

It belongs to the NHS family.

The chain is NHS-like protein 1 (Nhsl1) from Mus musculus (Mouse).